Here is a 229-residue protein sequence, read N- to C-terminus: Potassium/proton antiporter CemA (229 aa).

3 helical membrane-spanning segments follow: residues 7 to 27 (FTPLLYFASIVFLPWWISLSF), 114 to 134 (IISFVILSGYSIFGNEELVIL), and 190 to 210 (ISGLVSTFPVILDTLLKYWIF).

It belongs to the CemA family.

Its subcellular location is the plastid. The protein resides in the chloroplast inner membrane. It carries out the reaction K(+)(in) + H(+)(out) = K(+)(out) + H(+)(in). Functionally, contributes to K(+)/H(+) antiport activity by supporting proton efflux to control proton extrusion and homeostasis in chloroplasts in a light-dependent manner to modulate photosynthesis. Prevents excessive induction of non-photochemical quenching (NPQ) under continuous-light conditions. Indirectly promotes efficient inorganic carbon uptake into chloroplasts. This Jasminum nudiflorum (Winter jasmine) protein is Potassium/proton antiporter CemA.